The following is a 445-amino-acid chain: Enolase 1 (445 aa).

Histidine 164 and glutamate 173 together coordinate substrate. Glutamate 216 serves as the catalytic Proton donor. The Mg(2+) site is built by aspartate 251, glutamate 301, and aspartate 328. Substrate is bound by residues glutamate 301 and aspartate 328. The active-site Proton acceptor is the lysine 353. Substrate-binding positions include 380–383 and lysine 404; that span reads SHRS.

This sequence belongs to the enolase family. Homodimer. Mg(2+) is required as a cofactor.

It is found in the cytoplasm. It carries out the reaction (2R)-2-phosphoglycerate = phosphoenolpyruvate + H2O. The protein operates within carbohydrate degradation; glycolysis; pyruvate from D-glyceraldehyde 3-phosphate: step 4/5. The sequence is that of Enolase 1 (ENO1) from Hevea brasiliensis (Para rubber tree).